A 205-amino-acid chain; its full sequence is Molybdopterin synthase catalytic subunit (205 aa).

Residues 1-36 are disordered; sequence MQHPTLQPEVDPNPVVSSSSSSSSSNPLPAHLNPAN. Residues 146–147, K162, and 169–171 contribute to the substrate site; these read HR and KRE. The disordered stretch occupies residues 179–205; sequence GEGEGEWRANRDTDSQGNCRGDKVAEG. Over residues 183 to 205 the composition is skewed to basic and acidic residues; the sequence is GEWRANRDTDSQGNCRGDKVAEG.

Belongs to the MoaE family. MOCS2B subfamily. Heterotetramer; composed of 2 small (MOCS2A) and 2 large (MOCS2B) subunits.

The protein resides in the cytoplasm. The catalysed reaction is 2 [molybdopterin-synthase sulfur-carrier protein]-C-terminal-Gly-aminoethanethioate + cyclic pyranopterin phosphate + H2O = molybdopterin + 2 [molybdopterin-synthase sulfur-carrier protein]-C-terminal Gly-Gly + 2 H(+). Its pathway is cofactor biosynthesis; molybdopterin biosynthesis. Functionally, catalytic subunit of the molybdopterin synthase complex, a complex that catalyzes the conversion of precursor Z into molybdopterin. Acts by mediating the incorporation of 2 sulfur atoms from thiocarboxylated MOCS2A into precursor Z to generate a dithiolene group. The chain is Molybdopterin synthase catalytic subunit from Ajellomyces capsulatus (strain NAm1 / WU24) (Darling's disease fungus).